Here is a 315-residue protein sequence, read N- to C-terminus: Tyrosine recombinase XerC (315 aa).

Residues 1–103 enclose the Core-binding (CB) domain; it reads MITSFYAFLD…AIKSFARFCV (103 aa). In terms of domain architecture, Tyr recombinase spans 124–306; the sequence is ELPSPLTYEQ…SMKLKKQIHD (183 aa). Catalysis depends on residues Arg-164, Lys-188, His-258, Arg-261, and His-284. Residue Tyr-293 is the O-(3'-phospho-DNA)-tyrosine intermediate of the active site.

The protein belongs to the 'phage' integrase family. XerC subfamily. In terms of assembly, forms a cyclic heterotetrameric complex composed of two molecules of XerC and two molecules of XerD.

Its subcellular location is the cytoplasm. Functionally, site-specific tyrosine recombinase, which acts by catalyzing the cutting and rejoining of the recombining DNA molecules. The XerC-XerD complex is essential to convert dimers of the bacterial chromosome into monomers to permit their segregation at cell division. It also contributes to the segregational stability of plasmids. This Chlamydia trachomatis serovar L2b (strain UCH-1/proctitis) protein is Tyrosine recombinase XerC.